A 373-amino-acid polypeptide reads, in one-letter code: GDP-mannose 4,6 dehydratase 2 (373 aa).

Over residues Met-1–Ile-15 the composition is skewed to polar residues. The disordered stretch occupies residues Met-1 to Asp-21. Residues Gly-35–Asp-40, Arg-60, Asp-91–Leu-92, Leu-113–Ser-117, and Tyr-128 each bind NADP(+). Ser-117 is a binding site for substrate. Ser-162 lines the substrate pocket. Residue Ser-162 is part of the active site. Active-site nucleophile residues include Glu-164 and Tyr-185. A substrate-binding site is contributed by Tyr-185. Position 189 (Lys-189) interacts with NADP(+). A substrate-binding site is contributed by Asn-214. Positions 215 and 220 each coordinate NADP(+). Substrate-binding positions include Arg-220 to Lys-228, Gly-247, Arg-253, and Arg-314 to Glu-317.

This sequence belongs to the NAD(P)-dependent epimerase/dehydratase family. GDP-mannose 4,6-dehydratase subfamily. Homotetramer. Binds to GER1. Requires NADP(+) as cofactor. As to expression, expressed in roots, flowers, siliques, leaves and stems. Not expressed in the root meristem and the proximal part of the elongation zone, or in emerging lateral roots. Expressed in trichomes and guard cells, and in pollen just before anthesis.

It carries out the reaction GDP-alpha-D-mannose = GDP-4-dehydro-alpha-D-rhamnose + H2O. It participates in nucleotide-sugar biosynthesis; GDP-L-fucose biosynthesis via de novo pathway; GDP-L-fucose from GDP-alpha-D-mannose: step 1/2. Functionally, catalyzes the conversion of GDP-D-mannose to GDP-4-dehydro-6-deoxy-D-mannose. The protein is GDP-mannose 4,6 dehydratase 2 (MUR1) of Arabidopsis thaliana (Mouse-ear cress).